A 1104-amino-acid chain; its full sequence is Extended synaptotagmin-1 (1104 aa).

An N-acetylmethionine modification is found at methionine 1. At 1-38 (MERSPGEGPSPSPTDQPSAPSDPTGQPPAAHAKPDPGS) the chain is on the cytoplasmic side. Positions 1–47 (MERSPGEGPSPSPTDQPSAPSDPTGQPPAAHAKPDPGSGGQPAGPGA) are disordered. Positions 15–24 (DQPSAPSDPT) are enriched in polar residues. Gly residues predominate over residues 37 to 47 (GSGGQPAGPGA). A helical membrane pass occupies residues 39–59 (GGQPAGPGAAGEALAVLTSFG). The Lumenal portion of the chain corresponds to 60 to 62 (KRL). Residues 63-83 (LVLIPVYLAGAVGLSVGFVLF) traverse the membrane as a helical segment. At 84 to 1104 (GLALYLGWRR…LMDDKDKGSS (1021 aa)) the chain is on the cytoplasmic side. A coiled-coil region spans residues 91–116 (WRRVRDEKERSLRAARQLLDDEEQLT). In terms of domain architecture, SMP-LTD spans 135 to 313 (DVEKAEWLNK…LPNRLLVPLV (179 aa)). C2 domains lie at 312–433 (LVPD…DDWF), 460–580 (QVLQ…QLSS), 627–751 (SVDA…DEWL), and 777–899 (LEEV…TLNS). Position 324 is a phosphoserine; by CDK5 (serine 324). 8 residues coordinate Ca(2+): lysine 344, aspartate 345, aspartate 357, aspartate 404, aspartate 406, aspartate 408, aspartate 410, and aspartate 411. Disordered stretches follow at residues 617–641 (VDSENPQRGSSVDAPPRPCHTTPDS), 813–833 (RKGTKHPSPYATLTVGDTSHK), and 924–950 (SHSYSHSSSSLSEEPELSGGPPHVTSS). The residue at position 817 (lysine 817) is an N6-acetyllysine. Residues serine 820 and serine 941 each carry the phosphoserine modification. Residues 925-946 (HSYSHSSSSLSEEPELSGGPPH) are compositionally biased toward low complexity. Threonine 948 is modified (phosphothreonine). Phosphoserine is present on residues serine 949 and serine 963. The 123-residue stretch at 971-1093 (PLGQVKLTVW…DLSQGVARWY (123 aa)) folds into the C2 5 domain. Tyrosine 1009 carries the post-translational modification Phosphotyrosine. A required for phosphatidylinositol 4,5-bisphosphate-dependent location at the cell membrane region spans residues 1018–1025 (KNRGTKRK). Serine 1034 carries the phosphoserine modification.

The protein belongs to the extended synaptotagmin family. In terms of assembly, interacts with ESYT2 and ESYT3. Interacts with ADGRD1; inhibiting the G-protein-coupled receptor activity of ADGRD1. Interaction with ADGRD1 is abolished when cytosolic calcium increases, relieving ADGRD1 G-protein-coupled receptor activity. Interacts (phosphorylated form) with SLC2A4. Post-translationally, phosphorylated on Ser residues in insulin-treated adipocytes (in vitro); this promotes interaction with SLC2A4.

The protein localises to the endoplasmic reticulum membrane. It is found in the cell membrane. Binds calcium (via the C2 domains) and translocates to sites of contact between the endoplasmic reticulum and the cell membrane in response to increased cytosolic calcium levels. Helps tether the endoplasmic reticulum to the cell membrane and promotes the formation of appositions between the endoplasmic reticulum and the cell membrane. Acts as an inhibitor of ADGRD1 G-protein-coupled receptor activity in absence of cytosolic calcium. Binds glycerophospholipids in a barrel-like domain and may play a role in cellular lipid transport. The polypeptide is Extended synaptotagmin-1 (ESYT1) (Pongo abelii (Sumatran orangutan)).